Consider the following 127-residue polypeptide: Holo-[acyl-carrier-protein] synthase (127 aa).

Mg(2+) is bound by residues aspartate 9 and glutamate 58.

The protein belongs to the P-Pant transferase superfamily. AcpS family. Mg(2+) serves as cofactor.

Its subcellular location is the cytoplasm. The catalysed reaction is apo-[ACP] + CoA = holo-[ACP] + adenosine 3',5'-bisphosphate + H(+). Functionally, transfers the 4'-phosphopantetheine moiety from coenzyme A to a Ser of acyl-carrier-protein. In Shewanella baltica (strain OS185), this protein is Holo-[acyl-carrier-protein] synthase.